The chain runs to 161 residues: Putative pre-16S rRNA nuclease (161 aa).

The protein belongs to the YqgF nuclease family.

It is found in the cytoplasm. Its function is as follows. Could be a nuclease involved in processing of the 5'-end of pre-16S rRNA. The chain is Putative pre-16S rRNA nuclease from Bradyrhizobium diazoefficiens (strain JCM 10833 / BCRC 13528 / IAM 13628 / NBRC 14792 / USDA 110).